The sequence spans 87 residues: Probable Fe(2+)-trafficking protein (87 aa).

This sequence belongs to the Fe(2+)-trafficking protein family.

Could be a mediator in iron transactions between iron acquisition and iron-requiring processes, such as synthesis and/or repair of Fe-S clusters in biosynthetic enzymes. The polypeptide is Probable Fe(2+)-trafficking protein (Francisella tularensis subsp. holarctica (strain FTNF002-00 / FTA)).